The sequence spans 452 residues: Cholesterol 7-desaturase nvd 2 (452 aa).

A run of 2 helical transmembrane segments spans residues Leu-6 to Cys-26 and Phe-32 to Met-52. The region spanning Trp-107–Leu-212 is the Rieske domain. [2Fe-2S] cluster-binding residues include Cys-148, His-150, Cys-169, and His-172.

The protein belongs to the cholesterol 7-desaturase family. It depends on [2Fe-2S] cluster as a cofactor.

The protein resides in the membrane. It catalyses the reaction cholesterol + NADPH + O2 + H(+) = 7-dehydrocholesterol + NADP(+) + 2 H2O. The catalysed reaction is cholesterol + NADH + O2 + H(+) = 7-dehydrocholesterol + NAD(+) + 2 H2O. It functions in the pathway steroid hormone biosynthesis; dafachronic acid biosynthesis. Catalyzes the production of 7-dehydrocholesterol (7-DHC or cholesta-5,7-dien-3beta-ol) by inserting a double bond (desaturating) at the C7-C8 single bond of cholesterol. Essential regulator of steroid biosynthesis as this reaction is the first step in the synthesis of the steroid hormone Delta(7)-dafachronic acid. The polypeptide is Cholesterol 7-desaturase nvd 2 (Ciona intestinalis (Transparent sea squirt)).